A 71-amino-acid polypeptide reads, in one-letter code: Putative defensin-like protein 303 (71 aa).

The N-terminal stretch at 1–25 (MKSNKATFFLGLLLVYAFCIMLIES) is a signal peptide. Disulfide bonds link cysteine 27/cysteine 45, cysteine 33/cysteine 50, and cysteine 39/cysteine 52.

Belongs to the DEFL family.

It is found in the secreted. The polypeptide is Putative defensin-like protein 303 (Arabidopsis thaliana (Mouse-ear cress)).